Here is a 404-residue protein sequence, read N- to C-terminus: MRKQLLLGLGLVSALLVSVQASAQKFEQLAKTPQMGWNSWNTFGCNVDEKMIRAMADAMVTSGMKAAGYEYINIDDCWHGERDKNGFIQADKKHFPSGMKALADYVHAKGLKLGIYSDAGNTTCAGRPGSRGHEYQDALTYASWGIDYVKYDWCDTQDINPKSAYATMRDAIHKAGRPMLFSICEWGDNQPWEWAQDVGHSWRTTGDIYPCWNCEHNHGSWSSFGVLPILDKQAGLRKYAGPGHWNDMDMMEVGNGMTEEEDRAHFSLWAFMASPLIAGNDLRNMSDTTRAILTHKETIAINQDKLGIQAMKWIDEGDLEIYIKPLEKGHYAVLFLNRADDAMDYRFDWSFHYMKDDISKHEIFFDKQAFNWRNIWNGETGSTKEVLNIKVPAHGVVVLRLSPR.

Residues 1–23 form the signal peptide; the sequence is MRKQLLLGLGLVSALLVSVQASA. Cystine bridges form between C45–C77 and C124–C154. Catalysis depends on D152, which acts as the Nucleophile. 185-189 is a substrate binding site; the sequence is EWGDN. D207 (proton donor) is an active-site residue.

The protein belongs to the glycosyl hydrolase 27 family.

The catalysed reaction is Hydrolysis of terminal, non-reducing alpha-D-galactose residues in alpha-D-galactosides, including galactose oligosaccharides, galactomannans and galactolipids.. In terms of biological role, hydrolyzes galactomannan found in plant cell wall, by cleaving alpha-1,6-D-galactose side-chains from the mannan backbone. Appears to act in synergy with mannanase (ManA) to elicit hydrolysis of galactomannan. Has greater activity against galactomannans with decreased degree of polymerisation values. To a lesser extent, is also able to degrade other galactosides containing alpha-1,6-linked D-galactose, such as melibiose and stachyose. This is Alpha-galactosidase A (agaA) from Cellvibrio japonicus (strain Ueda107) (Pseudomonas fluorescens subsp. cellulosa).